The chain runs to 178 residues: Cytochrome b6-f complex iron-sulfur subunit 2 (178 aa).

A helical transmembrane segment spans residues 17-36 (LLNFFTGAIVAATASAAIYP). One can recognise a Rieske domain in the interval 61–161 (GHPIPASQIL…VQVKDDYIWI (101 aa)). [2Fe-2S] cluster-binding residues include C107, H109, C125, and H128. C112 and C127 are disulfide-bonded.

It belongs to the Rieske iron-sulfur protein family. As to quaternary structure, the 4 large subunits of the cytochrome b6-f complex are cytochrome b6, subunit IV (17 kDa polypeptide, PetD), cytochrome f and the Rieske protein, while the 4 small subunits are PetG, PetL, PetM and PetN. The complex functions as a dimer. Requires [2Fe-2S] cluster as cofactor.

The protein resides in the cellular thylakoid membrane. The enzyme catalyses 2 oxidized [plastocyanin] + a plastoquinol + 2 H(+)(in) = 2 reduced [plastocyanin] + a plastoquinone + 4 H(+)(out). Its function is as follows. Component of the cytochrome b6-f complex, which mediates electron transfer between photosystem II (PSII) and photosystem I (PSI), cyclic electron flow around PSI, and state transitions. The sequence is that of Cytochrome b6-f complex iron-sulfur subunit 2 from Trichormus variabilis (strain ATCC 29413 / PCC 7937) (Anabaena variabilis).